The sequence spans 880 residues: Probable receptor-like protein kinase At5g38990 (880 aa).

The N-terminal stretch at 1–21 is a signal peptide; it reads MICHVLVIFTILVSAVVDATA. Topologically, residues 22–440 are extracellular; sequence SYEPTDVFLI…GKGKSSHVLP (419 aa). N-linked (GlcNAc...) asparagine glycosylation is found at Asn-46, Asn-136, Asn-158, Asn-210, Asn-256, Asn-263, Asn-297, and Asn-324. The chain crosses the membrane as a helical span at residues 441–461; it reads IIIAVVGSAVALAFFVLVVVL. The Cytoplasmic segment spans residues 462–880; that stretch reads VVMKRKKKSN…FSEINEPKAR (419 aa). A disordered region spans residues 471 to 505; sequence NESSVDTTNKPSTNSSWGPLLHGTGSTNTKSASSL. 2 stretches are compositionally biased toward polar residues: residues 472–487 and 494–505; these read ESSV…NSSW and TGSTNTKSASSL. The region spanning 525–810 is the Protein kinase domain; sequence FEEKLIIGVG…EFALQLHETA (286 aa). Residues 531 to 539 and Lys-554 contribute to the ATP site; that span reads IGVGGFGSV. Catalysis depends on Asp-653, which acts as the Proton acceptor. The interval 820–846 is disordered; sequence LDLMPSGEVGTTTDGEDDLFSRTTGHV.

This sequence belongs to the protein kinase superfamily. Ser/Thr protein kinase family.

The protein resides in the membrane. This Arabidopsis thaliana (Mouse-ear cress) protein is Probable receptor-like protein kinase At5g38990.